A 136-amino-acid polypeptide reads, in one-letter code: Small ribosomal subunit protein uS12 (136 aa).

Residues 1–28 (MPTIQQLIRSERQELKKKTKSPALKSCP) form a disordered region. At Asp89 the chain carries 3-methylthioaspartic acid. Residues 101-136 (TLDTAGVKDRKQGRSKYGAKRPKPGAASTASTGKKR) are disordered. Residues 113-123 (GRSKYGAKRPK) show a composition bias toward basic residues.

It belongs to the universal ribosomal protein uS12 family. As to quaternary structure, part of the 30S ribosomal subunit. Contacts proteins S8 and S17. May interact with IF1 in the 30S initiation complex.

With S4 and S5 plays an important role in translational accuracy. Functionally, interacts with and stabilizes bases of the 16S rRNA that are involved in tRNA selection in the A site and with the mRNA backbone. Located at the interface of the 30S and 50S subunits, it traverses the body of the 30S subunit contacting proteins on the other side and probably holding the rRNA structure together. The combined cluster of proteins S8, S12 and S17 appears to hold together the shoulder and platform of the 30S subunit. This is Small ribosomal subunit protein uS12 from Cyanothece sp. (strain PCC 7425 / ATCC 29141).